The chain runs to 339 residues: tRNA methyltransferase 10 homolog A (339 aa).

Disordered regions lie at residues 1-90 (MSSE…HDRK) and 282-339 (DKAC…SLPH). Basic and acidic residues predominate over residues 14-35 (NVDKKQGINEDQEESQKPRLGE). The stretch at 52-81 (KQWEEQRELRKQKRKEKRKRKKLERQCQME) forms a coiled coil. A compositionally biased stretch (basic residues) spans 61 to 74 (RKQKRKEKRKRKKL). The 191-residue stretch at 89–279 (RKRVRRDVVH…TILPQRKGAV (191 aa)) folds into the SAM-dependent MTase TRM10-type domain. Positions 300 to 309 (GGSDSDSSEE) are enriched in acidic residues. The segment covering 310–330 (EYSRNELDSPHEEKQDKENHT) has biased composition (basic and acidic residues). Serine 336 is subject to Phosphoserine.

It belongs to the class IV-like SAM-binding methyltransferase superfamily. TRM10 family. In terms of assembly, interacts with tRNA. Expressed in embryonic and fetal brain. It is expressed throughout the dorsal telencephalon at 8 and 11 weeks of gestation, with highest expression in ventricular zone and marginal zone. Detected in cerebellar cortex and nuclei, but not in dorsal telencephalon, at later stages.

It is found in the nucleus. The protein resides in the nucleolus. It carries out the reaction guanosine(9) in tRNA + S-adenosyl-L-methionine = N(1)-methylguanosine(9) in tRNA + S-adenosyl-L-homocysteine + H(+). In terms of biological role, S-adenosyl-L-methionine-dependent guanine N(1)-methyltransferase that catalyzes the formation of N(1)-methylguanine at position 9 (m1G9) in tRNAs. Probably not able to catalyze formation of N(1)-methyladenine at position 9 (m1A9) in tRNAs. In Homo sapiens (Human), this protein is tRNA methyltransferase 10 homolog A (TRMT10A).